A 376-amino-acid polypeptide reads, in one-letter code: Lipid-A-disaccharide synthase (376 aa).

This sequence belongs to the LpxB family.

It carries out the reaction a lipid X + a UDP-2-N,3-O-bis[(3R)-3-hydroxyacyl]-alpha-D-glucosamine = a lipid A disaccharide + UDP + H(+). The protein operates within bacterial outer membrane biogenesis; LPS lipid A biosynthesis. Functionally, condensation of UDP-2,3-diacylglucosamine and 2,3-diacylglucosamine-1-phosphate to form lipid A disaccharide, a precursor of lipid A, a phosphorylated glycolipid that anchors the lipopolysaccharide to the outer membrane of the cell. The sequence is that of Lipid-A-disaccharide synthase from Pseudomonas fluorescens (strain Pf0-1).